The primary structure comprises 911 residues: Protein translocase subunit SecA (911 aa).

ATP contacts are provided by residues Q87, G105–T109, and D513. The disordered stretch occupies residues I853–G911. Residues G862 to E875 are compositionally biased toward low complexity. C895, C897, C906, and H907 together coordinate Zn(2+). Residues K901–G911 are compositionally biased toward basic residues.

It belongs to the SecA family. Monomer and homodimer. Part of the essential Sec protein translocation apparatus which comprises SecA, SecYEG and auxiliary proteins SecDF-YajC and YidC. It depends on Zn(2+) as a cofactor.

The protein localises to the cell inner membrane. The protein resides in the cytoplasm. It catalyses the reaction ATP + H2O + cellular proteinSide 1 = ADP + phosphate + cellular proteinSide 2.. Its function is as follows. Part of the Sec protein translocase complex. Interacts with the SecYEG preprotein conducting channel. Has a central role in coupling the hydrolysis of ATP to the transfer of proteins into and across the cell membrane, serving both as a receptor for the preprotein-SecB complex and as an ATP-driven molecular motor driving the stepwise translocation of polypeptide chains across the membrane. This Teredinibacter turnerae (strain ATCC 39867 / T7901) protein is Protein translocase subunit SecA.